The sequence spans 233 residues: Probable GTP-binding protein EngB (233 aa).

Residues 23 to 209 enclose the EngB-type G domain; that stretch reads AVPEVAFAGR…QRIVAGWLCL (187 aa). Residues 31-38, 58-62, 82-85, 149-152, and 188-190 each bind GTP; these read GRSNAGKS, GRTQH, DLPG, TKAD, and FSS. Mg(2+) contacts are provided by Ser38 and Thr60.

This sequence belongs to the TRAFAC class TrmE-Era-EngA-EngB-Septin-like GTPase superfamily. EngB GTPase family. It depends on Mg(2+) as a cofactor.

Functionally, necessary for normal cell division and for the maintenance of normal septation. The protein is Probable GTP-binding protein EngB of Ralstonia pickettii (strain 12J).